A 95-amino-acid polypeptide reads, in one-letter code: RING finger protein Z (95 aa).

Polar residues predominate over residues 1 to 17; the sequence is MGNCNRTQKPSSSSNNL. Residues 1 to 25 form a disordered region; it reads MGNCNRTQKPSSSSNNLEKPPQAAE. Gly2 is lipidated: N-myristoyl glycine; by host. Residues 40-76 form an RING-type; atypical zinc finger; that stretch reads CKCCWFADKNLITCSDHYLCLRCHQIMLRNSELCNIC. Residues 90 to 93 carry the ASAP motif motif; it reads ASAP.

The protein belongs to the arenaviridae Z protein family. In terms of assembly, interacts with protein NP; this interaction probably directs the encapsidated genome to budding sites. Interacts (via RING domain) with polymerase L; this interaction inhibits viral transcription and replication, Z partially blocks the product exit tunnel for the releasing nascent RNA product. Interacts with the glycoprotein complex; this interaction plays a role in virion budding. Interacts with host eIF4E; this interaction results in eIF4E reduced affinity for its substrate, the 5'-m7 G cap structure. Interacts (via late-budding domain) with host TSG101; this interaction is essential for budding and release of viral particles. Interacts with host RPLP0; this interaction may serve to load ribosome-like particles inside the virion. Interacts with host PML; this interaction induces PML bodies redistribution in the cytoplasm upon viral infection. Post-translationally, myristoylation is required for the role of RING finger protein Z in assembly and budding.

The protein localises to the virion. The protein resides in the host cytoplasm. It localises to the host perinuclear region. Its subcellular location is the host cell membrane. Functionally, plays a crucial role in virion assembly and budding. Expressed late in the virus life cycle, it acts as an inhibitor of viral transcription and RNA synthesis by interacting with the viral polymerase L. Presumably recruits the NP encapsidated genome to cellular membranes at budding sites via direct interaction with NP. Plays critical roles in the final steps of viral release by interacting with host TSG101, a member of the vacuolar protein-sorting pathway and using other cellular host proteins involved in vesicle formation pathway. The budding of the virus progeny occurs after association of protein Z with the viral glycoprotein complex SSP-GP1-GP2 at the cell periphery, step that requires myristoylation of protein Z. Also selectively represses protein production by associating with host eIF4E. In cell-based minigenome assay, has an inhibitory effect on the ribonucleoprotein machinery (vRNP), which is responsible for the replication and transcription of the viral genome. This Tacaribe virus (strain Franze-Fernandez) (TCRV) protein is RING finger protein Z.